The primary structure comprises 304 residues: MPELALLEEVVEKVRPLLGQGKVADYIPALASVDAGKLGIAVTTVDGETLGAGDYLEPFSIQSISKVFSLTLALTLYEEAEIWSRVGKEPSGHSFNSLVQVELERGKPRNPFINAGALVIADLLQSRLGAPKHRMLELVRQLSQNDKVCFDKQVADSEYQHSARNAAIAYLMKSFGNFQGDVDTVLRTYFHYCALKMNCADLSKAMLYLANRGKSITGTELISQVQTRQLNALLATSGLYDGAGEFAYRVGMPGKSGVGGGIIAVIPGELSICVWSPELDGNGNSLAGTAMLEHLSQRLGRSIF.

Residues Ser-63, Asn-114, Glu-158, Asn-165, Tyr-189, Tyr-240, and Val-258 each coordinate substrate.

This sequence belongs to the glutaminase family. Homotetramer.

The catalysed reaction is L-glutamine + H2O = L-glutamate + NH4(+). The chain is Glutaminase from Shewanella baltica (strain OS185).